Consider the following 358-residue polypeptide: Microbial Terpene synthase-like protein 13 (358 aa).

Belongs to the terpene synthase family.

Its function is as follows. No terpene synthase activity detected in vitro. This Selaginella moellendorffii (Spikemoss) protein is Microbial Terpene synthase-like protein 13.